The primary structure comprises 488 residues: Glutamate--tRNA ligase (488 aa).

The short motif at 12-22 is the 'HIGH' region element; it reads PSPTGYMHVGN. C109, C111, C136, and H138 together coordinate Zn(2+). A 'KMSKS' region motif is present at residues 253-257; it reads KLSKR. K256 is a binding site for ATP.

The protein belongs to the class-I aminoacyl-tRNA synthetase family. Glutamate--tRNA ligase type 1 subfamily. As to quaternary structure, monomer. Zn(2+) is required as a cofactor.

The protein resides in the cytoplasm. The enzyme catalyses tRNA(Glu) + L-glutamate + ATP = L-glutamyl-tRNA(Glu) + AMP + diphosphate. In terms of biological role, catalyzes the attachment of glutamate to tRNA(Glu) in a two-step reaction: glutamate is first activated by ATP to form Glu-AMP and then transferred to the acceptor end of tRNA(Glu). This is Glutamate--tRNA ligase from Clostridium tetani (strain Massachusetts / E88).